A 332-amino-acid chain; its full sequence is Tetraacyldisaccharide 4'-kinase (332 aa).

Residue 53 to 60 coordinates ATP; the sequence is SVGGNGKT.

The protein belongs to the LpxK family.

The catalysed reaction is a lipid A disaccharide + ATP = a lipid IVA + ADP + H(+). Its pathway is glycolipid biosynthesis; lipid IV(A) biosynthesis; lipid IV(A) from (3R)-3-hydroxytetradecanoyl-[acyl-carrier-protein] and UDP-N-acetyl-alpha-D-glucosamine: step 6/6. In terms of biological role, transfers the gamma-phosphate of ATP to the 4'-position of a tetraacyldisaccharide 1-phosphate intermediate (termed DS-1-P) to form tetraacyldisaccharide 1,4'-bis-phosphate (lipid IVA). This chain is Tetraacyldisaccharide 4'-kinase, found in Haemophilus influenzae (strain 86-028NP).